The following is a 345-amino-acid chain: Adenosine kinase 2 (345 aa).

Residue Asp-300 is part of the active site.

It belongs to the carbohydrate kinase PfkB family. Interacts with the begomovirus AL2 protein and the curtovirus L2 protein. Interacts with KIN11. It depends on Mg(2+) as a cofactor. Post-translationally, phosphorylated by KIN11. Widely expressed.

The protein localises to the cytoplasm. It carries out the reaction adenosine + ATP = AMP + ADP + H(+). It functions in the pathway purine metabolism; AMP biosynthesis via salvage pathway; AMP from adenosine: step 1/1. Inactivated by the begomovirus AL2 protein or the curtovirus L2 protein. In terms of biological role, ATP dependent phosphorylation of adenosine and other related nucleoside analogs to monophosphate derivatives. Essential to sustain methyl recycling. This is Adenosine kinase 2 from Arabidopsis thaliana (Mouse-ear cress).